We begin with the raw amino-acid sequence, 623 residues long: Chaperone protein HtpG (623 aa).

Residues 1–326 (MAEEKRQFQA…SQDLPLNVSR (326 aa)) are a; substrate-binding. The interval 327-543 (EMLQHNPVLS…EGEMSMHLEK (217 aa)) is b. The tract at residues 544 to 623 (MLRAHNQAPG…VSVMEKGLLG (80 aa)) is c.

The protein belongs to the heat shock protein 90 family. As to quaternary structure, homodimer.

It is found in the cytoplasm. In terms of biological role, molecular chaperone. Has ATPase activity. The polypeptide is Chaperone protein HtpG (Paramagnetospirillum magneticum (strain ATCC 700264 / AMB-1) (Magnetospirillum magneticum)).